The following is a 167-amino-acid chain: Neutrophilic granule protein (167 aa).

A signal peptide spans 1–21; that stretch reads MAGLWKTFVLVVALAVVSCEA. The segment at 122–141 is disordered; it reads EDTQETSFNDKQDVSEKEKF.

The protein belongs to the cathelicidin family. In terms of assembly, monomer. Homodimer; disulfide-linked. Expressed in myeloid bone marrow cells. Expressed in neutrophilic precursors (at protein level). Expressed in myeloid bone marrow cells.

Its subcellular location is the secreted. The protein localises to the cytoplasmic granule. Functionally, acts as an inhibitor of cathepsin B (CTSB) activity. Plays a role as a negative regulator of tumor vascular development, cell invasion and metastasis. The chain is Neutrophilic granule protein from Mus musculus (Mouse).